The chain runs to 627 residues: Sodium- and chloride-dependent GABA transporter 3 (627 aa).

Positions 1-36 are disordered; that stretch reads MTAEQALPLGNGKAAEEARGSEALGGGGGGAAGTRE. The Cytoplasmic portion of the chain corresponds to 1–53; sequence MTAEQALPLGNGKAAEEARGSEALGGGGGGAAGTREARDKAVHERGHWNNKVE. The residue at position 21 (S21) is a Phosphoserine. The span at 23-32 shows a compositional bias: gly residues; sequence ALGGGGGGAA. 3 helical membrane-spanning segments follow: residues 54-74, 82-101, and 126-146; these read FVLS…FPYL, AFLI…VFFL, and GIGY…IIIL. Residues 147-220 are Extracellular-facing; sequence AWAIFYLSNC…DGIEHIGNLR (74 aa). N-linked (GlcNAc...) asparagine glycans are attached at residues N182, N185, and N193. 9 helical membrane-spanning segments follow: residues 221-239, 248-265, 301-318, 330-351, 384-403, 433-451, 468-488, 509-528, and 548-566; these read WELA…FCIW, VVYV…ILLI, IFFS…LGSY, IMLC…FSVL, MPLS…FLGL, LLIL…VMLT, GMCL…VYGS, WCWK…FFLV, and IGWL…WIFI. Topologically, residues 567-627 are cytoplasmic; sequence KLWKTEGTLP…SAITEKETHF (61 aa).

It belongs to the sodium:neurotransmitter symporter (SNF) (TC 2.A.22) family. SLC6A11 subfamily. As to expression, brain and retina. Expressed predominantly within neurons. Expressed in the hippocampus (at protein level).

It is found in the cell membrane. The catalysed reaction is 4-aminobutanoate(out) + chloride(out) + 2 Na(+)(out) = 4-aminobutanoate(in) + chloride(in) + 2 Na(+)(in). It catalyses the reaction taurine(out) + chloride(out) + 2 Na(+)(out) = taurine(in) + chloride(in) + 2 Na(+)(in). The enzyme catalyses beta-alanine(out) + chloride(out) + 2 Na(+)(out) = beta-alanine(in) + chloride(in) + 2 Na(+)(in). It carries out the reaction hypotaurine(out) + chloride(out) + 2 Na(+)(out) = hypotaurine(in) + chloride(in) + 2 Na(+)(in). Its activity is regulated as follows. GABA transport is inhibited by beta-alanine. Functionally, mediates sodium- and chloride-dependent transport of gamma-aminobutyric acid (GABA). Can also mediate transport of beta-alanine and to a lower extent that of taurine and hypotaurine. The protein is Sodium- and chloride-dependent GABA transporter 3 (Slc6a11) of Rattus norvegicus (Rat).